Consider the following 361-residue polypeptide: 3-dehydroquinate synthase (361 aa).

NAD(+)-binding positions include asparagine 41, 70-75 (DGEQYK), 104-108 (GVIGD), 128-129 (TT), lysine 141, lysine 150, 150-151 (KN), and 168-171 (CLTT). Glutamate 183, histidine 246, and histidine 263 together coordinate Zn(2+).

The protein belongs to the sugar phosphate cyclases superfamily. Dehydroquinate synthase family. The cofactor is NAD(+). It depends on Co(2+) as a cofactor. Zn(2+) is required as a cofactor.

It is found in the cytoplasm. It carries out the reaction 7-phospho-2-dehydro-3-deoxy-D-arabino-heptonate = 3-dehydroquinate + phosphate. Its pathway is metabolic intermediate biosynthesis; chorismate biosynthesis; chorismate from D-erythrose 4-phosphate and phosphoenolpyruvate: step 2/7. Its function is as follows. Catalyzes the conversion of 3-deoxy-D-arabino-heptulosonate 7-phosphate (DAHP) to dehydroquinate (DHQ). This is 3-dehydroquinate synthase from Vibrio cholerae serotype O1 (strain ATCC 39315 / El Tor Inaba N16961).